The primary structure comprises 141 residues: Hemoglobin subunit alpha-A (141 aa).

The Globin domain maps to 1-141 (VLSSHDKSNV…VGTVLTAKYR (141 aa)). Histidine 58 contributes to the O2 binding site. Histidine 87 contributes to the heme b binding site.

Belongs to the globin family. As to quaternary structure, heterotetramer of two alpha chains and two beta chains. As to expression, red blood cells.

Functionally, involved in oxygen transport from the lung to the various peripheral tissues. The chain is Hemoglobin subunit alpha-A (HBAA) from Phoenicopterus ruber (American flamingo).